Consider the following 137-residue polypeptide: MNVPRGWLAALGSVLLVSAAQLGMRWGMSRLPLPEAWAGQTPEHAALLAVALAVAAYAASLLCWLAALRHLPLGRAYSLLSASYALVYLLAASLPAFEETFTTGKTLGVGLVVLGVLTVNARRTAAAPAHHPSRKAL.

The Cytoplasmic portion of the chain corresponds to 1–5 (MNVPR). A helical transmembrane segment spans residues 6–26 (GWLAALGSVLLVSAAQLGMRW). The Periplasmic segment spans residues 27–44 (GMSRLPLPEAWAGQTPEH). A helical membrane pass occupies residues 45 to 65 (AALLAVALAVAAYAASLLCWL). At 66 to 76 (AALRHLPLGRA) the chain is on the cytoplasmic side. The chain crosses the membrane as a helical span at residues 77 to 97 (YSLLSASYALVYLLAASLPAF). The Periplasmic segment spans residues 98 to 100 (EET). Residues 101–121 (FTTGKTLGVGLVVLGVLTVNA) form a helical membrane-spanning segment. The Cytoplasmic portion of the chain corresponds to 122–137 (RRTAAAPAHHPSRKAL).

The protein belongs to the ArnF family. Heterodimer of ArnE and ArnF.

It localises to the cell inner membrane. It functions in the pathway bacterial outer membrane biogenesis; lipopolysaccharide biosynthesis. Its function is as follows. Translocates 4-amino-4-deoxy-L-arabinose-phosphoundecaprenol (alpha-L-Ara4N-phosphoundecaprenol) from the cytoplasmic to the periplasmic side of the inner membrane. The protein is Probable 4-amino-4-deoxy-L-arabinose-phosphoundecaprenol flippase subunit ArnF of Pseudomonas paraeruginosa (strain DSM 24068 / PA7) (Pseudomonas aeruginosa (strain PA7)).